Consider the following 582-residue polypeptide: Semenogelin-2 (582 aa).

The first 23 residues, 1–23 (MKSIILFVLSLLLILEKQAAVMG), serve as a signal peptide directing secretion. Disordered stretches follow at residues 25 to 62 (KGGSKGQLSSGSSRFPHRHRSQHYSGQKDKQHTESKGS), 131 to 156 (KGGQVHHGTQNPSQDQGNSPSGKGIF), 173 to 192 (KEQASASGAQKGRTQGGSQS), 272 to 477 (NLNQ…EQRQ), and 502 to 554 (VEGK…SGAH). The span at 50–59 (GQKDKQHTES) shows a compositional bias: basic and acidic residues. Polar residues-rich tracts occupy residues 137-151 (HGTQNPSQDQGNSPS) and 174-192 (EQASASGAQKGRTQGGSQS). Residues 292–310 (RTEERQLNHGEKSVQKDVS) show a composition bias toward basic and acidic residues. The segment covering 325–335 (KSQNQVTIPSQ) has biased composition (polar residues). Residues 336 to 345 (DQEHGHKENK) show a composition bias toward basic and acidic residues. A compositionally biased stretch (polar residues) spans 385-395 (KSQNQVTIPSQ). Over residues 396–405 (DQEHGHKENK) the composition is skewed to basic and acidic residues. Residues 445 to 455 (KSQNQVTIPSQ) are compositionally biased toward polar residues. Basic and acidic residues predominate over residues 456 to 465 (DQEHGHKENK). Composition is skewed to polar residues over residues 466–477 (ISYQSSSTEQRQ) and 506–529 (SQIQTPNPNQGQWSGQNAKGNSGK). Positions 537 to 546 (LLSHEQEGRY) are enriched in basic and acidic residues.

Belongs to the semenogelin family. Interacts with SERPINA5.

It localises to the secreted. In terms of biological role, participates in the formation of a gel matrix (sperm coagulum) entrapping the accessory gland secretions and ejaculated spermatozoa. The sequence is that of Semenogelin-2 (SEMG2) from Macaca nemestrina (Pig-tailed macaque).